The primary structure comprises 156 residues: Small ribosomal subunit protein uS7 (156 aa).

Belongs to the universal ribosomal protein uS7 family. In terms of assembly, part of the 30S ribosomal subunit. Contacts proteins S9 and S11.

Its function is as follows. One of the primary rRNA binding proteins, it binds directly to 16S rRNA where it nucleates assembly of the head domain of the 30S subunit. Is located at the subunit interface close to the decoding center, probably blocks exit of the E-site tRNA. This chain is Small ribosomal subunit protein uS7, found in Bartonella tribocorum (strain CIP 105476 / IBS 506).